We begin with the raw amino-acid sequence, 325 residues long: Biotin synthase (325 aa).

The 219-residue stretch at 36 to 254 (NEVQLAMLLS…IALARIMFPK (219 aa)) folds into the Radical SAM core domain. 3 residues coordinate [4Fe-4S] cluster: Cys-51, Cys-55, and Cys-58. [2Fe-2S] cluster is bound by residues Cys-95, Cys-126, Cys-186, and Arg-258.

Belongs to the radical SAM superfamily. Biotin synthase family. As to quaternary structure, homodimer. It depends on [4Fe-4S] cluster as a cofactor. Requires [2Fe-2S] cluster as cofactor.

The enzyme catalyses (4R,5S)-dethiobiotin + (sulfur carrier)-SH + 2 reduced [2Fe-2S]-[ferredoxin] + 2 S-adenosyl-L-methionine = (sulfur carrier)-H + biotin + 2 5'-deoxyadenosine + 2 L-methionine + 2 oxidized [2Fe-2S]-[ferredoxin]. It participates in cofactor biosynthesis; biotin biosynthesis; biotin from 7,8-diaminononanoate: step 2/2. In terms of biological role, catalyzes the conversion of dethiobiotin (DTB) to biotin by the insertion of a sulfur atom into dethiobiotin via a radical-based mechanism. This chain is Biotin synthase, found in Neorickettsia sennetsu (strain ATCC VR-367 / Miyayama) (Ehrlichia sennetsu).